The chain runs to 148 residues: Large ribosomal subunit protein cL37 (148 aa).

A chloroplast-targeting transit peptide spans 1 to 65; sequence MALLCFNSLP…SSHGRIVVKA (65 aa). A66 bears the N-acetylalanine mark. Residues 125–148 are disordered; it reads LVRKRKMRKKGRWPPSKMKKNKNV.

Belongs to the chloroplast-specific ribosomal protein cL37 family. In terms of assembly, part of the 50S ribosomal subunit.

The protein resides in the plastid. It localises to the chloroplast. The protein is Large ribosomal subunit protein cL37 (PSRP5) of Arabidopsis thaliana (Mouse-ear cress).